A 79-amino-acid polypeptide reads, in one-letter code: MYRMKRSQVRTPIRRLIRNVNLDWEDSMALGCTTVIERGTLRRLKRATLNTFLDSPVHVLLVMPKLIPEHWEKWEDVKR.

This is an uncharacterized protein from Homo sapiens (Human).